Reading from the N-terminus, the 147-residue chain is NADPH-dependent 7-cyano-7-deazaguanine reductase (147 aa).

The disordered stretch occupies residues 1–23; the sequence is MQTTHLGKNSPIPQSPEEASLDY. Cysteine 46 (thioimide intermediate) is an active-site residue. The Proton donor role is filled by aspartate 53. Substrate is bound by residues 68–70 and 87–88; these read VES and HE.

Belongs to the GTP cyclohydrolase I family. QueF type 1 subfamily.

It localises to the cytoplasm. The catalysed reaction is 7-aminomethyl-7-carbaguanine + 2 NADP(+) = 7-cyano-7-deazaguanine + 2 NADPH + 3 H(+). Its pathway is tRNA modification; tRNA-queuosine biosynthesis. Functionally, catalyzes the NADPH-dependent reduction of 7-cyano-7-deazaguanine (preQ0) to 7-aminomethyl-7-deazaguanine (preQ1). This Zymomonas mobilis subsp. mobilis (strain ATCC 31821 / ZM4 / CP4) protein is NADPH-dependent 7-cyano-7-deazaguanine reductase.